The primary structure comprises 117 residues: Large ribosomal subunit protein bL20 (117 aa).

The protein belongs to the bacterial ribosomal protein bL20 family.

Functionally, binds directly to 23S ribosomal RNA and is necessary for the in vitro assembly process of the 50S ribosomal subunit. It is not involved in the protein synthesizing functions of that subunit. The polypeptide is Large ribosomal subunit protein bL20 (Mycoplasma mobile (strain ATCC 43663 / 163K / NCTC 11711) (Mesomycoplasma mobile)).